A 504-amino-acid polypeptide reads, in one-letter code: Histidine ammonia-lyase (504 aa).

Positions 142-144 (ASG) form a cross-link, 5-imidazolinone (Ala-Gly). Ser143 is subject to 2,3-didehydroalanine (Ser).

The protein belongs to the PAL/histidase family. Contains an active site 4-methylidene-imidazol-5-one (MIO), which is formed autocatalytically by cyclization and dehydration of residues Ala-Ser-Gly.

The protein resides in the cytoplasm. It carries out the reaction L-histidine = trans-urocanate + NH4(+). The protein operates within amino-acid degradation; L-histidine degradation into L-glutamate; N-formimidoyl-L-glutamate from L-histidine: step 1/3. In Staphylococcus aureus (strain MRSA252), this protein is Histidine ammonia-lyase.